The following is a 238-amino-acid chain: Ubiquitin-conjugating enzyme E2 R2 (238 aa).

The region spanning 8–174 (SSQKALMLEL…IRKQVSATKA (167 aa)) is the UBC core domain. Catalysis depends on Cys93, which acts as the Glycyl thioester intermediate. The interval 98–113 (HPPVDDPQSGELPSER) is important for ubiquitin transfer. Residues 194–238 (TKVPSNDNSSDLLYDDLYDDDIDDEDEEEEDADCYDDDDSGNEES) are disordered. The span at 206 to 238 (LYDDLYDDDIDDEDEEEEDADCYDDDDSGNEES) shows a compositional bias: acidic residues. Ser233 is modified (phosphoserine; by CK2).

The protein belongs to the ubiquitin-conjugating enzyme family. As to quaternary structure, interacts with multiple Cul1-RING E3 ubiquitin-protein ligase complexes, also known as SCF (SKP1-CUL1-F-box protein) complexes, including SCF(FBXW7) and SCF(BTRC). Interacts with multiple Cul2-RING (CRL2) E3 ubiquitin-protein ligase complexes, also known as ECS (Elongin BC-CUL2/5-SOCS-box protein) complexes, including CRL2(FEM1C) and ECS(VHL). When phosphorylated, interacts with beta-TrCP (BTRC).

It carries out the reaction S-ubiquitinyl-[E1 ubiquitin-activating enzyme]-L-cysteine + [E2 ubiquitin-conjugating enzyme]-L-cysteine = [E1 ubiquitin-activating enzyme]-L-cysteine + S-ubiquitinyl-[E2 ubiquitin-conjugating enzyme]-L-cysteine.. It functions in the pathway protein modification; protein ubiquitination. Neddylation of CUL2 in the CRL2(FEM1C) E3 ligase complex increases substrate affinity of UBE2R2 and the ubiquitin-transfer rate in the E2-E3 complex. E2 ubiquitin-conjugating enzyme that accepts ubiquitin from an E1 ubiquitin-activating protein, and catalyzes its covalent attachment to other proteins by an E3 ubiquitin-protein ligase complex. In vitro catalyzes monoubiquitination and 'Lys-48'-linked polyubiquitination. Works in collaboration with various Cul1-RING and Cul2-RING E3 ligase complexes. May be involved in degradation of katenin. The protein is Ubiquitin-conjugating enzyme E2 R2 (UBE2R2) of Homo sapiens (Human).